We begin with the raw amino-acid sequence, 210 residues long: MMEVKLWNDKREREMYENFAELFAIIKATEKLEKAYIRDLINPSEYESECQKLIVHFKTLSATLKDTVPNIERFADTYKMDCPAALYRLVTSGLPATVEHRATVAASTSNSASIVAECVQNFITSMDSLKLNMVAVDQVYPLLSDLSASLNKLSILPPDFEGKTKMKEWLSRLSKMGAADELTEQQSRQLHFDLESSYNSFMAALPKAGN.

One can recognise a VPS28 N-terminal domain in the interval 1 to 99; the sequence is MMEVKLWNDK…VTSGLPATVE (99 aa). In terms of domain architecture, VPS28 C-terminal spans 109–205; sequence SNSASIVAEC…SSYNSFMAAL (97 aa).

Belongs to the VPS28 family. Component of the endosomal sorting required for transport complex I (ESCRT-I), composed of ELC, VPS28 and VPS37. Interacts with ELC.

The protein resides in the endosome. Its function is as follows. Component of the ESCRT-I complex (endosomal sorting complex required for transport I), a regulator of vesicular trafficking process. Required for the sorting of endocytic ubiquitinated cargos into multivesicular bodies (MVBs). Mediates the association to the ESCRT-0 complex. The polypeptide is Vacuolar protein sorting-associated protein 28 homolog 2 (VPS28-2) (Arabidopsis thaliana (Mouse-ear cress)).